The sequence spans 108 residues: Phosphoribosyl-AMP cyclohydrolase (108 aa).

A Mg(2+)-binding site is contributed by aspartate 78. Cysteine 79 provides a ligand contact to Zn(2+). Residues aspartate 80 and aspartate 82 each coordinate Mg(2+). Cysteine 95 and cysteine 102 together coordinate Zn(2+).

It belongs to the PRA-CH family. In terms of assembly, homodimer. Mg(2+) serves as cofactor. The cofactor is Zn(2+).

It localises to the cytoplasm. It catalyses the reaction 1-(5-phospho-beta-D-ribosyl)-5'-AMP + H2O = 1-(5-phospho-beta-D-ribosyl)-5-[(5-phospho-beta-D-ribosylamino)methylideneamino]imidazole-4-carboxamide. It participates in amino-acid biosynthesis; L-histidine biosynthesis; L-histidine from 5-phospho-alpha-D-ribose 1-diphosphate: step 3/9. Functionally, catalyzes the hydrolysis of the adenine ring of phosphoribosyl-AMP. The protein is Phosphoribosyl-AMP cyclohydrolase of Cenarchaeum symbiosum (strain A).